A 335-amino-acid chain; its full sequence is Dihydroorotate dehydrogenase (quinone) (335 aa).

Residues 61-65 and T85 each bind FMN; that span reads AGLDK. A substrate-binding site is contributed by K65. 110-114 contacts substrate; sequence NRMGF. FMN contacts are provided by N138 and N171. N171 serves as a coordination point for substrate. S174 serves as the catalytic Nucleophile. N176 serves as a coordination point for substrate. K216 and T244 together coordinate FMN. Residue 245–246 participates in substrate binding; it reads NT. Residues G267, G296, and 317–318 each bind FMN; that span reads YS.

The protein belongs to the dihydroorotate dehydrogenase family. Type 2 subfamily. As to quaternary structure, monomer. FMN is required as a cofactor.

The protein localises to the cell membrane. It carries out the reaction (S)-dihydroorotate + a quinone = orotate + a quinol. Its pathway is pyrimidine metabolism; UMP biosynthesis via de novo pathway; orotate from (S)-dihydroorotate (quinone route): step 1/1. Its function is as follows. Catalyzes the conversion of dihydroorotate to orotate with quinone as electron acceptor. The polypeptide is Dihydroorotate dehydrogenase (quinone) (Pseudoalteromonas atlantica (strain T6c / ATCC BAA-1087)).